Consider the following 469-residue polypeptide: MSPQTETKASVGFKAGVKDYKLNYYTPDYETKDTDILAAFRVTPQPGVPPEEAGAAVAAESSTGTWTTVWTDGLTSLDRYKGRCYHIEPVAGEENQYIPYVAYPLDLFEEGSVTNMFTSIVGNVFGFKALRALRLEDLRIPPAYSKTFQGPPHGIQVERDKLNKYGRPLLGCTIKPKLGLSAKNYGRAVYECLRGGLDFTKDDENVNSQPFMRWRDRFLFCAEALYKAQAETGEIKGHYLNATAGTCEEMMKRAVFARELGVPIVMHDYLTGGFTANTSLAHYCRDNGLLLHIHRAMHAVIDRQKNHGMHFRVLAKALRMSGGDHVHAGTVVGKLEGERDITLGFVDLLRDDFIEKDRSRGIYFTQDWVSLPGVLPVASGGIHVWHMPALTEIFGDDSVLQFGGGTLGHPWGNAPGAVANRVALEACVQARNEGRDLAREGNEIIREASKWSPELAAACEVWKEIKFEF.

The propeptide occupies 1–2 (MS). An N-acetylproline modification is found at Pro3. Position 14 is an N6,N6,N6-trimethyllysine (Lys14). Positions 123 and 173 each coordinate substrate. Lys175 functions as the Proton acceptor in the catalytic mechanism. Lys177 contributes to the substrate binding site. Mg(2+)-binding residues include Lys201, Asp203, and Glu204. An N6-carboxylysine modification is found at Lys201. His294 (proton acceptor) is an active-site residue. Substrate-binding residues include Arg295, His327, and Ser379.

It belongs to the RuBisCO large chain family. Type I subfamily. Heterohexadecamer of 8 large chains and 8 small chains; disulfide-linked. The disulfide link is formed within the large subunit homodimers. Requires Mg(2+) as cofactor. The disulfide bond which can form in the large chain dimeric partners within the hexadecamer appears to be associated with oxidative stress and protein turnover.

It is found in the plastid. It localises to the chloroplast. The catalysed reaction is 2 (2R)-3-phosphoglycerate + 2 H(+) = D-ribulose 1,5-bisphosphate + CO2 + H2O. It carries out the reaction D-ribulose 1,5-bisphosphate + O2 = 2-phosphoglycolate + (2R)-3-phosphoglycerate + 2 H(+). In terms of biological role, ruBisCO catalyzes two reactions: the carboxylation of D-ribulose 1,5-bisphosphate, the primary event in carbon dioxide fixation, as well as the oxidative fragmentation of the pentose substrate in the photorespiration process. Both reactions occur simultaneously and in competition at the same active site. This Brexia madagascariensis protein is Ribulose bisphosphate carboxylase large chain.